The sequence spans 96 residues: Salivary protein FS50 (96 aa).

An N-terminal signal peptide occupies residues 1–19; that stretch reads MKWILVLALVCLAVEYSYS. 4 disulfides stabilise this stretch: cysteine 26-cysteine 71, cysteine 50-cysteine 78, cysteine 63-cysteine 91, and cysteine 67-cysteine 93.

The protein resides in the secreted. Salivary protein that inhibits host voltage-gated sodium channel Nav1.5/SCN5A. In Xenopsylla cheopis (Oriental rat flea), this protein is Salivary protein FS50.